A 312-amino-acid chain; its full sequence is Ribosomal protein L11 methyltransferase (312 aa).

Residues T162, G183, D205, and N248 each contribute to the S-adenosyl-L-methionine site.

This sequence belongs to the methyltransferase superfamily. PrmA family.

The protein resides in the cytoplasm. The catalysed reaction is L-lysyl-[protein] + 3 S-adenosyl-L-methionine = N(6),N(6),N(6)-trimethyl-L-lysyl-[protein] + 3 S-adenosyl-L-homocysteine + 3 H(+). In terms of biological role, methylates ribosomal protein L11. The chain is Ribosomal protein L11 methyltransferase from Bacillus cereus (strain ATCC 10987 / NRS 248).